Reading from the N-terminus, the 1650-residue chain is MIDIIDYNFNNHIKNDNSKFNNILKKYQINNNTFENGAILDLNDIGSNILYKNEDKEKDEEEYYYYKENQNIYNKIGNDLNYNFQYNEYIENNDFENNQPIDNFNVEGSGGGKQIISYYLSKNGNDTTGNGTINSPYLSICKIVNIINSYNGINIFKVFIEIGNYEAVEGCTLNIINNSVVSLIYFTKNEIINNNNNNNFNNNNNNNNNNNNNKNNYNNNKSNLIIPNIINLNINLKNSTFFLNYINLHYFNEKVINITYGINTFQFLIENSNLHCVNPKLPYCNILFNKLNQSLIINDDNEAMILIKNSNIIKFDFYFNIIEMNVENSNLYFTSLYSLISQNLTFSKSYFNNTLIYLVEYQAINVSIDHCKMIYDFSNNIQVFLMGTGNILTISNSQMESTGEFFSSYITCKNAKVQLMNVQFINWYLLRPFINLSLNSTLIMENVFARKMYIPAFIEIGNSELIIDTLEISGNKLVLIIIEGPSVISISYLTLKYQSEQGSPIMMNFPGGGFGMKTIINITSSNFINIDGFTLKDAQLTLFNVSMHSDSINSLFALSSSQLFSSKSTFSSSLIVGSYFLFSLDFTSLVDLDRCILTNSSSLFQANSFSNITITNSLIDSVFSRSVAIEIQGGSSFTMINSIINKTYVVSQSFIYSSSNSDIIIHKCNFLQFVMGLKPLGNFLNSNVFIDHLLLYQSFFQNQIFVATSSIMYISDTKLFNNSIYGSEMFLLNNQSYLLMNNSLIYGNSISVCFSSSHSLANIHNVTFQNNSGIFLYSVDSKISLSLLEFSKNPISSLYYLFYFTNSSATFQQLTIDSNYFMGSVIEAHFSEILFTNLIFSLNQNVDNLLKDRESPSLVFTHSNVKIINSTINSNSQWSLDLIWSQKSILIIKNSLFNSNSIPYNGYLIRLETCHLSLDHCLIFGTQSIEGTIGSFNSIINATNNLFLQNNALEMGGCFFLSNSQILSFSNNSFLNNTASIGAAIFTNGTLINNTLIIKSNKFLNNNAYEYGDNIGSYPTWISVEYPEDFDSTINYIRLYDNYSNLVADNFYTANIIIYDSRVNENISLTTFIRGGSGDFNYSFNVFSIYDFQISINIIADGFNINYLKYKSPPKCLNFQTSTLSDGCIFCPINQAATPEKGECTKCDTNKLVCLNNDVHTLQDYFMINNDVSKVYQCPFGLCSGQNNCNSNLFLLSSLQSPLCSRCLNDYNNENDDENQFKYNNNENSGSSGNSNNNENSNSNSDSNSNSNSNSNSNSNSNSNSNSNSNSNSNSNSNENNYNGGDDDDDEKNINNYKPSKSKNGLYCCNKFQPLLLIPFIFWILFFGLFLSLFKNVITGTMIGQIILFLQLNSIVFYPLPNIYGLQLFRMSIDYFDRYCLFKLDYIEKISISLISIFLIYLIGISDVTSRLILSILKRSLKLKKLIPLVIEKQLRKFEYYKMNRINTRLKSNWNIYLMLIQPLFHCLISLIVPKSIGSTTYLSIDLTILFISTPIQIVFFFSSIVILFLLEFRWWDLIFVFKTILFTSLSVTLLYNPPVYFSALVICQIVYSYSQFAFSPQRKDHMYRVENLLNLFQLSILIVINTSIIRNLSFNLIGILFTIVIFSCSLITIIYKLFFYKKLKTIKNHRLLNLIINVDDNKKKTNKNK.

A coiled-coil region spans residues Asn194–Ile225. Disordered regions lie at residues Asn197–Asn216 and Glu1218–Asn1296. Low complexity predominate over residues Asn1224–Gly1284. The next 9 membrane-spanning stretches (helical) occupy residues Pro1314–Phe1334, Ile1347–Phe1369, Ile1390–Ser1410, Trp1454–Pro1474, Ile1489–Phe1509, Trp1515–Leu1535, Pro1539–Phe1559, Val1570–Ile1590, and Phe1595–Ile1615.

It is found in the membrane. The protein is Transmembrane domain-containing protein DDB_G0287209 of Dictyostelium discoideum (Social amoeba).